A 177-amino-acid chain; its full sequence is Large ribosomal subunit protein uL6 (177 aa).

It belongs to the universal ribosomal protein uL6 family. Part of the 50S ribosomal subunit.

In terms of biological role, this protein binds to the 23S rRNA, and is important in its secondary structure. It is located near the subunit interface in the base of the L7/L12 stalk, and near the tRNA binding site of the peptidyltransferase center. This chain is Large ribosomal subunit protein uL6, found in Actinobacillus succinogenes (strain ATCC 55618 / DSM 22257 / CCUG 43843 / 130Z).